The following is a 503-amino-acid chain: 3-octaprenyl-4-hydroxybenzoate carboxy-lyase (503 aa).

Asparagine 176 lines the Mn(2+) pocket. Prenylated FMN-binding positions include 179–181 (IYR), 193–195 (RWL), and 198–199 (RG). Residue glutamate 242 participates in Mn(2+) binding. Aspartate 303 acts as the Proton donor in catalysis.

Belongs to the UbiD family. In terms of assembly, homohexamer. The cofactor is prenylated FMN. Requires Mn(2+) as cofactor.

Its subcellular location is the cell membrane. The enzyme catalyses a 4-hydroxy-3-(all-trans-polyprenyl)benzoate + H(+) = a 2-(all-trans-polyprenyl)phenol + CO2. It participates in cofactor biosynthesis; ubiquinone biosynthesis. In terms of biological role, catalyzes the decarboxylation of 3-octaprenyl-4-hydroxy benzoate to 2-octaprenylphenol, an intermediate step in ubiquinone biosynthesis. This chain is 3-octaprenyl-4-hydroxybenzoate carboxy-lyase, found in Ralstonia pickettii (strain 12J).